Consider the following 390-residue polypeptide: Putative 8-amino-7-oxononanoate synthase (390 aa).

Residue R19 participates in substrate binding. Position 105 to 106 (105 to 106 (GY)) interacts with pyridoxal 5'-phosphate. H130 provides a ligand contact to substrate. Pyridoxal 5'-phosphate-binding positions include S177, 202 to 205 (DEAH), and 234 to 237 (TFSK). N6-(pyridoxal phosphate)lysine is present on K237. T351 serves as a coordination point for substrate.

This sequence belongs to the class-II pyridoxal-phosphate-dependent aminotransferase family. BioF subfamily. In terms of assembly, homodimer. Pyridoxal 5'-phosphate serves as cofactor.

It carries out the reaction 6-carboxyhexanoyl-[ACP] + L-alanine + H(+) = (8S)-8-amino-7-oxononanoate + holo-[ACP] + CO2. Its pathway is cofactor biosynthesis; biotin biosynthesis. Its function is as follows. Catalyzes the decarboxylative condensation of pimeloyl-[acyl-carrier protein] and L-alanine to produce 8-amino-7-oxononanoate (AON), [acyl-carrier protein], and carbon dioxide. The sequence is that of Putative 8-amino-7-oxononanoate synthase (bioF) from Geobacillus kaustophilus (strain HTA426).